Here is a 90-residue protein sequence, read N- to C-terminus: Large ribosomal subunit protein eL37 (90 aa).

The A20-type zinc-finger motif lies at 13 to 46 (NKSHTLCNRCGRRSFHVQKKTCSSCGYPAAKMRS). Zn(2+)-binding residues include cysteine 19, cysteine 22, cysteine 34, and cysteine 37.

The protein belongs to the eukaryotic ribosomal protein eL37 family. Component of the large ribosomal subunit. Mature ribosomes consist of a small (40S) and a large (60S) subunit. The 40S subunit contains about 32 different proteins and 1 molecule of RNA (18S). The 60S subunit contains 45 different proteins and 3 molecules of RNA (25S, 5.8S and 5S). It depends on Zn(2+) as a cofactor.

It is found in the cytoplasm. Functionally, component of the ribosome, a large ribonucleoprotein complex responsible for the synthesis of proteins in the cell. The small ribosomal subunit (SSU) binds messenger RNAs (mRNAs) and translates the encoded message by selecting cognate aminoacyl-transfer RNA (tRNA) molecules. The large subunit (LSU) contains the ribosomal catalytic site termed the peptidyl transferase center (PTC), which catalyzes the formation of peptide bonds, thereby polymerizing the amino acids delivered by tRNAs into a polypeptide chain. The nascent polypeptides leave the ribosome through a tunnel in the LSU and interact with protein factors that function in enzymatic processing, targeting, and the membrane insertion of nascent chains at the exit of the ribosomal tunnel. The chain is Large ribosomal subunit protein eL37 from Candida albicans (strain SC5314 / ATCC MYA-2876) (Yeast).